Reading from the N-terminus, the 529-residue chain is Peptide chain release factor 3 (529 aa).

Residues 11–280 enclose the tr-type G domain; that stretch reads AKRRTFAIIS…GLVAWAPAPM (270 aa). GTP-binding positions include 20–27, 88–92, and 142–145; these read SHPDAGKT, DTPGH, and NKLD.

Belongs to the TRAFAC class translation factor GTPase superfamily. Classic translation factor GTPase family. PrfC subfamily.

It is found in the cytoplasm. Its function is as follows. Increases the formation of ribosomal termination complexes and stimulates activities of RF-1 and RF-2. It binds guanine nucleotides and has strong preference for UGA stop codons. It may interact directly with the ribosome. The stimulation of RF-1 and RF-2 is significantly reduced by GTP and GDP, but not by GMP. This is Peptide chain release factor 3 (prfC) from Salmonella typhi.